Reading from the N-terminus, the 171-residue chain is Squamosa promoter-binding protein 2 (171 aa).

Disordered regions lie at residues 20–46 (GDEGSDFEEEEEGEDEEEEEQERVVKV) and 57–76 (KLNLGEGSGGKSGEKHTASG). The span at 22 to 40 (EGSDFEEEEEGEDEEEEEQ) shows a compositional bias: acidic residues. The SBP-type zinc-finger motif lies at 82–159 (QPCCLVENCG…AGHNERRRKS (78 aa)). 8 residues coordinate Zn(2+): C85, C90, C107, H110, C126, C129, H133, and C145. Residues 142-158 (KRSCRRRLAGHNERRRK) carry the Bipartite nuclear localization signal motif. The span at 149–158 (LAGHNERRRK) shows a compositional bias: basic residues. A disordered region spans residues 149-171 (LAGHNERRRKSSLESHKEGRSPR). The segment covering 159 to 171 (SSLESHKEGRSPR) has biased composition (basic and acidic residues).

The protein localises to the nucleus. Functionally, probable transcriptional factor. Binds to the promoter of the SQUAMOSA gene. This Antirrhinum majus (Garden snapdragon) protein is Squamosa promoter-binding protein 2 (SBP2).